A 343-amino-acid chain; its full sequence is MKCTIVGATGYAAIELIRLIELHPHLEIVSLISDSQTNQEMNDLYSFMNNKQFPVLTAFSLEQIEAVETDLLFLATPSGISTKYLKQLDDWKGTVIDLSGDLRLEKSLYEKWYPHESVDTVLQKKATYGLTEWKREQIKDSRLIANPGCYATAVLLGLLPLLEERVIDPSQIIIHASSGLSGAGKTLTEQTHHVRSSENVRLYKMNQHQHIPEIESIAEDITGQQITVSLATYLVPLNRGIMATMTLQPLVEKTEAEWRTWFIEKYKQESFIRVGQTDPEIKSAAGSNYCDISVYLDTRTGRLTVVSVLDNMQKGAAGQAIQNANVIGGYPETLGLTQQPFFI.

Cys-149 is an active-site residue.

The protein belongs to the NAGSA dehydrogenase family. Type 1 subfamily.

It localises to the cytoplasm. The catalysed reaction is N-acetyl-L-glutamate 5-semialdehyde + phosphate + NADP(+) = N-acetyl-L-glutamyl 5-phosphate + NADPH + H(+). It functions in the pathway amino-acid biosynthesis; L-arginine biosynthesis; N(2)-acetyl-L-ornithine from L-glutamate: step 3/4. Its function is as follows. Catalyzes the NADPH-dependent reduction of N-acetyl-5-glutamyl phosphate to yield N-acetyl-L-glutamate 5-semialdehyde. The chain is N-acetyl-gamma-glutamyl-phosphate reductase from Exiguobacterium sibiricum (strain DSM 17290 / CCUG 55495 / CIP 109462 / JCM 13490 / 255-15).